Consider the following 224-residue polypeptide: Small ribosomal subunit protein uS3 (224 aa).

Positions 38-106 (LREFVKEKLG…EVYLNVVEVR (69 aa)) constitute a KH type-2 domain.

This sequence belongs to the universal ribosomal protein uS3 family. As to quaternary structure, part of the 30S ribosomal subunit. Forms a tight complex with proteins S10 and S14.

Functionally, binds the lower part of the 30S subunit head. Binds mRNA in the 70S ribosome, positioning it for translation. The sequence is that of Small ribosomal subunit protein uS3 from Anaeromyxobacter dehalogenans (strain 2CP-1 / ATCC BAA-258).